The following is a 425-amino-acid chain: Glutamyl-tRNA reductase (425 aa).

Substrate contacts are provided by residues 51-54 (TCNR), serine 111, 116-118 (DMQ), and glutamine 122. Cysteine 52 (nucleophile) is an active-site residue. 191–196 (GLGEIG) is a binding site for NADP(+).

Belongs to the glutamyl-tRNA reductase family. As to quaternary structure, homodimer.

It carries out the reaction (S)-4-amino-5-oxopentanoate + tRNA(Glu) + NADP(+) = L-glutamyl-tRNA(Glu) + NADPH + H(+). It functions in the pathway porphyrin-containing compound metabolism; protoporphyrin-IX biosynthesis; 5-aminolevulinate from L-glutamyl-tRNA(Glu): step 1/2. Functionally, catalyzes the NADPH-dependent reduction of glutamyl-tRNA(Glu) to glutamate 1-semialdehyde (GSA). This Cytophaga hutchinsonii (strain ATCC 33406 / DSM 1761 / CIP 103989 / NBRC 15051 / NCIMB 9469 / D465) protein is Glutamyl-tRNA reductase.